The following is a 692-amino-acid chain: Elongation factor G (692 aa).

The 276-residue stretch at 8-283 folds into the tr-type G domain; the sequence is NRIRNIGIAA…AVIDYLPAPT (276 aa). GTP-binding positions include 17–24, 81–85, and 135–138; these read AHIDAGKT, DTPGH, and NKMD.

This sequence belongs to the TRAFAC class translation factor GTPase superfamily. Classic translation factor GTPase family. EF-G/EF-2 subfamily.

The protein resides in the cytoplasm. Functionally, catalyzes the GTP-dependent ribosomal translocation step during translation elongation. During this step, the ribosome changes from the pre-translocational (PRE) to the post-translocational (POST) state as the newly formed A-site-bound peptidyl-tRNA and P-site-bound deacylated tRNA move to the P and E sites, respectively. Catalyzes the coordinated movement of the two tRNA molecules, the mRNA and conformational changes in the ribosome. The polypeptide is Elongation factor G (Helicobacter pylori (strain P12)).